The chain runs to 365 residues: Carbamoyl phosphate synthase small chain (365 aa).

CPSase stretches follow at residues M1–G166 and M1–H169. L-glutamine contacts are provided by S45, G218, and G220. In terms of domain architecture, Glutamine amidotransferase type-1 spans R170 to E357. C245 acts as the Nucleophile in catalysis. L-glutamine-binding residues include L246, Q249, N287, G289, and Y290. Catalysis depends on residues H330 and E332.

Belongs to the CarA family. In terms of assembly, composed of two chains; the small (or glutamine) chain promotes the hydrolysis of glutamine to ammonia, which is used by the large (or ammonia) chain to synthesize carbamoyl phosphate. Tetramer of heterodimers (alpha,beta)4.

The catalysed reaction is hydrogencarbonate + L-glutamine + 2 ATP + H2O = carbamoyl phosphate + L-glutamate + 2 ADP + phosphate + 2 H(+). It catalyses the reaction L-glutamine + H2O = L-glutamate + NH4(+). Its pathway is amino-acid biosynthesis; L-arginine biosynthesis; carbamoyl phosphate from bicarbonate: step 1/1. It participates in pyrimidine metabolism; UMP biosynthesis via de novo pathway; (S)-dihydroorotate from bicarbonate: step 1/3. Its function is as follows. Small subunit of the glutamine-dependent carbamoyl phosphate synthetase (CPSase). CPSase catalyzes the formation of carbamoyl phosphate from the ammonia moiety of glutamine, carbonate, and phosphate donated by ATP, constituting the first step of 2 biosynthetic pathways, one leading to arginine and/or urea and the other to pyrimidine nucleotides. The small subunit (glutamine amidotransferase) binds and cleaves glutamine to supply the large subunit with the substrate ammonia. In Bacillus cereus (strain ATCC 10987 / NRS 248), this protein is Carbamoyl phosphate synthase small chain.